We begin with the raw amino-acid sequence, 1100 residues long: Guanylate cyclase 2G (1100 aa).

Residues 1–43 (MASRTRSESPLEPRLYAGAGSRADHPSLVLMLSVVMLVTCLEA) form the signal peptide. At 44–481 (AKLTVGFHAP…VAGMTVTVTA (438 aa)) the chain is on the extracellular side. 9 N-linked (GlcNAc...) asparagine glycosylation sites follow: Asn-55, Asn-85, Asn-94, Asn-217, Asn-225, Asn-238, Asn-418, Asn-440, and Asn-443. A helical membrane pass occupies residues 482 to 502 (VIPTVTFLVLASAAAITGLML). The Cytoplasmic portion of the chain corresponds to 503–1100 (WRLRGKVQSH…EEEAKVSEIL (598 aa)). Residues 546–837 (SDTSTVKASA…EASPRGHVSI (292 aa)) form the Protein kinase domain. Positions 901-1031 (TIFFSDIVGF…DTVNMASRME (131 aa)) constitute a Guanylate cyclase domain.

The protein belongs to the adenylyl cyclase class-4/guanylyl cyclase family. As to quaternary structure, homooligomer. In vitro interacts with NPR1/GC-A. Post-translationally, N-glycosylated. As to expression, highly expressed in testis.

It is found in the cell membrane. The enzyme catalyses GTP = 3',5'-cyclic GMP + diphosphate. The protein is Guanylate cyclase 2G (Gucy2g) of Mus musculus (Mouse).